Consider the following 128-residue polypeptide: MTGPFRYNGGSVRSFALTTNFSFPSYDLSFNETEHGVFCYVSRPLTKERSCSHPYISLGSSYGIPDAENIEYPRDARYHSPLLFTVRLLLFSTYWSYSLASQHFKVFTVKESLLLLIISSNFGEPFFS.

This is an uncharacterized protein from Schizosaccharomyces pombe (strain 972 / ATCC 24843) (Fission yeast).